Consider the following 352-residue polypeptide: Ferrochelatase (352 aa).

Residues H222 and E303 each coordinate Fe cation.

This sequence belongs to the ferrochelatase family.

It is found in the cytoplasm. It carries out the reaction heme b + 2 H(+) = protoporphyrin IX + Fe(2+). It participates in porphyrin-containing compound metabolism; protoheme biosynthesis; protoheme from protoporphyrin-IX: step 1/1. In terms of biological role, catalyzes the ferrous insertion into protoporphyrin IX. This chain is Ferrochelatase, found in Brucella canis (strain ATCC 23365 / NCTC 10854 / RM-666).